The following is a 190-amino-acid chain: Embryo-specific protein ATS3B (190 aa).

An N-terminal signal peptide occupies residues 1–24 (MASVRLFFTLISFVFIISTSVYES). Residue Asn37 is glycosylated (N-linked (GlcNAc...) asparagine). Residues 48-158 (CAYTVIISTS…ESVWYGFNYC (111 aa)) form the PLAT domain.

Interacts with EULS3 (via N-terminus). As to expression, expressed in roots, rosette leaves, stems, cauline leaves and flowers.

Its subcellular location is the secreted. May play a role during embryo development. In Arabidopsis thaliana (Mouse-ear cress), this protein is Embryo-specific protein ATS3B.